A 132-amino-acid polypeptide reads, in one-letter code: Small ribosomal subunit protein uS8 (132 aa).

It belongs to the universal ribosomal protein uS8 family. Part of the 30S ribosomal subunit. Contacts proteins S5 and S12.

In terms of biological role, one of the primary rRNA binding proteins, it binds directly to 16S rRNA central domain where it helps coordinate assembly of the platform of the 30S subunit. In Brucella melitensis biotype 1 (strain ATCC 23456 / CCUG 17765 / NCTC 10094 / 16M), this protein is Small ribosomal subunit protein uS8.